The following is a 223-amino-acid chain: Ubiquitin carboxyl-terminal hydrolase isozyme L1 (223 aa).

Position 1 is an N-acetylmethionine (Met-1). The region spanning 2 to 221 (QLKPMEINPE…VRFSAVALCK (220 aa)) is the UCH catalytic domain. Residues 5–10 (PMEINP) are interaction with ubiquitin. The Nucleophile role is filled by Cys-90. At Ser-125 the chain carries Phosphoserine. The active-site Proton donor is His-161. The tract at residues 211 to 216 (EVRFSA) is interaction with ubiquitin. Cys-220 carries S-farnesyl cysteine lipidation. Residues 221 to 223 (KAA) constitute a propeptide, removed in mature form.

Belongs to the peptidase C12 family. In terms of assembly, monomer. Homodimer. Interacts with COPS5 and SNCA. Post-translationally, O-glycosylated. As to expression, expressed in the placenta at all stages of pregnancy. Expression increases as pregnancy progresses.

It is found in the cytoplasm. The protein resides in the endoplasmic reticulum membrane. The protein localises to the nucleus. It carries out the reaction Thiol-dependent hydrolysis of ester, thioester, amide, peptide and isopeptide bonds formed by the C-terminal Gly of ubiquitin (a 76-residue protein attached to proteins as an intracellular targeting signal).. Functionally, ubiquitin-protein hydrolase involved both in the processing of ubiquitin precursors and of ubiquitinated proteins. This enzyme is a thiol protease that recognizes and hydrolyzes a peptide bond at the C-terminal glycine of ubiquitin. Also binds to free monoubiquitin and may prevent its degradation in lysosomes. The homodimer may have ATP-independent ubiquitin ligase activity. This Macaca fascicularis (Crab-eating macaque) protein is Ubiquitin carboxyl-terminal hydrolase isozyme L1 (UCHL1).